The sequence spans 148 residues: Large ribosomal subunit protein uL15 (148 aa).

The disordered stretch occupies residues 1 to 51; that stretch reads MNLSNLKPAEGSTKTRKRIGRGAGSGLGGTSTRGHKGAKSRSGYSKKVGFE. The span at 21–31 shows a compositional bias: gly residues; it reads RGAGSGLGGTS.

It belongs to the universal ribosomal protein uL15 family. As to quaternary structure, part of the 50S ribosomal subunit.

In terms of biological role, binds to the 23S rRNA. In Bacteroides thetaiotaomicron (strain ATCC 29148 / DSM 2079 / JCM 5827 / CCUG 10774 / NCTC 10582 / VPI-5482 / E50), this protein is Large ribosomal subunit protein uL15.